The sequence spans 139 residues: Cellular retinoic acid-binding protein 2 (139 aa).

A Nuclear localization signal motif is present at residues lysine 21–lysine 31. Lysine 103 is covalently cross-linked (Glycyl lysine isopeptide (Lys-Gly) (interchain with G-Cter in SUMO)). Arginine 134–tyrosine 136 serves as a coordination point for all-trans-retinoate.

Belongs to the calycin superfamily. Fatty-acid binding protein (FABP) family. Interacts with importin alpha, RXR and RARA. Post-translationally, sumoylated in response to retinoic acid binding, sumoylation is critical for dissociation from ER and subsequent nuclear translocation.

The protein localises to the cytoplasm. It localises to the endoplasmic reticulum. It is found in the nucleus. Its function is as follows. Transports retinoic acid to the nucleus. Regulates the access of retinoic acid to the nuclear retinoic acid receptors. In Rattus norvegicus (Rat), this protein is Cellular retinoic acid-binding protein 2 (Crabp2).